The sequence spans 325 residues: Glutarate 2-hydroxylase (325 aa).

His-160, Asp-162, and His-292 together coordinate Fe cation.

Belongs to the glutarate hydroxylase family. As to quaternary structure, homotetramer. Requires Fe(2+) as cofactor.

It catalyses the reaction glutarate + 2-oxoglutarate + O2 = (S)-2-hydroxyglutarate + succinate + CO2. It participates in amino-acid degradation. Functionally, acts as an alpha-ketoglutarate-dependent dioxygenase catalyzing hydroxylation of glutarate (GA) to L-2-hydroxyglutarate (L2HG). Functions in a L-lysine degradation pathway that proceeds via cadaverine, glutarate and L-2-hydroxyglutarate. In Pseudomonas putida (strain GB-1), this protein is Glutarate 2-hydroxylase.